Reading from the N-terminus, the 250-residue chain is Ubiquinone/menaquinone biosynthesis C-methyltransferase UbiE (250 aa).

S-adenosyl-L-methionine contacts are provided by residues S73, D94, and 122 to 123 (NA).

Belongs to the class I-like SAM-binding methyltransferase superfamily. MenG/UbiE family.

It catalyses the reaction a 2-demethylmenaquinol + S-adenosyl-L-methionine = a menaquinol + S-adenosyl-L-homocysteine + H(+). The catalysed reaction is a 2-methoxy-6-(all-trans-polyprenyl)benzene-1,4-diol + S-adenosyl-L-methionine = a 5-methoxy-2-methyl-3-(all-trans-polyprenyl)benzene-1,4-diol + S-adenosyl-L-homocysteine + H(+). The protein operates within quinol/quinone metabolism; menaquinone biosynthesis; menaquinol from 1,4-dihydroxy-2-naphthoate: step 2/2. Its pathway is cofactor biosynthesis; ubiquinone biosynthesis. Its function is as follows. Methyltransferase required for the conversion of demethylmenaquinol (DMKH2) to menaquinol (MKH2) and the conversion of 2-polyprenyl-6-methoxy-1,4-benzoquinol (DDMQH2) to 2-polyprenyl-3-methyl-6-methoxy-1,4-benzoquinol (DMQH2). This Legionella pneumophila (strain Lens) protein is Ubiquinone/menaquinone biosynthesis C-methyltransferase UbiE.